The chain runs to 156 residues: 6,7-dimethyl-8-ribityllumazine synthase (156 aa).

5-amino-6-(D-ribitylamino)uracil-binding positions include Phe22, 57–59 (AYE), and 81–83 (TVI). Position 86-87 (86-87 (GT)) interacts with (2S)-2-hydroxy-3-oxobutyl phosphate. His89 functions as the Proton donor in the catalytic mechanism. Phe114 contacts 5-amino-6-(D-ribitylamino)uracil. Arg128 is a (2S)-2-hydroxy-3-oxobutyl phosphate binding site.

Belongs to the DMRL synthase family. Forms an icosahedral capsid composed of 60 subunits, arranged as a dodecamer of pentamers.

It catalyses the reaction (2S)-2-hydroxy-3-oxobutyl phosphate + 5-amino-6-(D-ribitylamino)uracil = 6,7-dimethyl-8-(1-D-ribityl)lumazine + phosphate + 2 H2O + H(+). Its pathway is cofactor biosynthesis; riboflavin biosynthesis; riboflavin from 2-hydroxy-3-oxobutyl phosphate and 5-amino-6-(D-ribitylamino)uracil: step 1/2. Functionally, catalyzes the formation of 6,7-dimethyl-8-ribityllumazine by condensation of 5-amino-6-(D-ribitylamino)uracil with 3,4-dihydroxy-2-butanone 4-phosphate. This is the penultimate step in the biosynthesis of riboflavin. This chain is 6,7-dimethyl-8-ribityllumazine synthase, found in Erwinia tasmaniensis (strain DSM 17950 / CFBP 7177 / CIP 109463 / NCPPB 4357 / Et1/99).